Reading from the N-terminus, the 101-residue chain is Urease subunit beta (101 aa).

The protein belongs to the urease beta subunit family. Heterotrimer of UreA (gamma), UreB (beta) and UreC (alpha) subunits. Three heterotrimers associate to form the active enzyme.

The protein localises to the cytoplasm. The enzyme catalyses urea + 2 H2O + H(+) = hydrogencarbonate + 2 NH4(+). It functions in the pathway nitrogen metabolism; urea degradation; CO(2) and NH(3) from urea (urease route): step 1/1. The protein is Urease subunit beta of Burkholderia orbicola (strain AU 1054).